Consider the following 160-residue polypeptide: Glucagon-1 (160 aa).

A signal peptide spans 1–22; it reads MSDPGFLAAPVLLLLLVSLASA. Propeptides lie at residues 23 to 40, 74 to 79, and 116 to 127; these read SLEQ…RPLS, GGSELQ, and DGGDHLAENSED. Residues 112-132 are disordered; that stretch reads KSRRDGGDHLAENSEDKRHAE.

The protein belongs to the glucagon family.

It is found in the secreted. Functionally, promotes hydrolysis of glycogen and lipids, and raises the blood sugar level. This Petromyzon marinus (Sea lamprey) protein is Glucagon-1 (gcg1).